A 1700-amino-acid polypeptide reads, in one-letter code: A-kinase anchor protein SPHKAP (1700 aa).

3 disordered regions span residues 364–385, 742–778, and 793–885; these read SNLNPGDHEDTRNALPPRQDGE, IRRRETEPSCQPSDPGASQAWTKATESSSSSPLSNSH, and SKQD…NTQE. Residues 768-778 show a composition bias toward low complexity; sequence SSSSSPLSNSH. Residues 822–831 show a composition bias toward polar residues; sequence DSSTATTSSK. Positions 839–855 are enriched in basic and acidic residues; the sequence is AGEDTKSPHHSENECRA. The segment covering 857 to 873 has biased composition (polar residues); that stretch reads SEGQRSPTVSQSRSGSQ. The PKA-RII subunit binding domain stretch occupies residues 929-946; the sequence is FAEELADTVVSMATEIAA. The interval 980–1006 is disordered; that stretch reads KRKKESQGSGTAVRKHKPPRLSEIKRK. A phosphoserine mark is found at S1025, S1085, S1107, S1120, S1121, S1124, S1259, and S1288. Disordered regions lie at residues 1374–1414, 1481–1535, and 1585–1604; these read DSVT…PVPI, IHSD…DTSS, and GQSESTEAPASGPPTGTASP. The segment covering 1383–1398 has biased composition (polar residues); it reads PVSSLSKTASLTNHSP. The segment covering 1586–1604 has biased composition (polar residues); sequence QSESTEAPASGPPTGTASP.

This sequence belongs to the AKAP110 family. Interacts (via the PKA-RII subunit binding domain) with the RI subunit of PKA. Interacts with SPHK1; the interaction greatly reduces SPHK1 activity. Highly expressed in heart. Both isoforms abundantly expressed in ventricle. Also expressed in spleen, ovary and brain.

It is found in the cytoplasm. Functionally, anchoring protein that binds preferentially to the type I regulatory subunit of c-AMP-dependent protein kinase (PKA type I) and targets it to distinct subcellular compartments. May act as a converging factor linking cAMP and sphingosine signaling pathways. Plays a regulatory role in the modulation of SPHK1. This chain is A-kinase anchor protein SPHKAP (SPHKAP), found in Homo sapiens (Human).